Reading from the N-terminus, the 61-residue chain is Small ribosomal subunit protein bS21 (61 aa).

The segment at 34–61 is disordered; the sequence is KREHYESPSVKRKKKSEAARKRKYKYNK. Positions 43–61 are enriched in basic residues; sequence VKRKKKSEAARKRKYKYNK.

The protein belongs to the bacterial ribosomal protein bS21 family.

The polypeptide is Small ribosomal subunit protein bS21 (Thermoanaerobacter pseudethanolicus (strain ATCC 33223 / 39E) (Clostridium thermohydrosulfuricum)).